We begin with the raw amino-acid sequence, 451 residues long: MILLAKFRNLYSKSRANDTISEGDKPEKATGDLEAGRNRLVSMEVGMGNDEVVSSGSGNSAHGRSISPSPSSASHGDPLLPVAENWCHTQVKVVKFNYMWTINNFSFCREEMGEVLKSSTFSAGCNDKLKWCLRINPKGLDEESRDYLSLYLLLVQCNKSEVRAKFKFSILNAKREETKAMESQRAYRFVQGKDWGFKKFIRRDFLLDEANGLLPGDRLSIFCEVSVVAETVNVTGQTNVSQLFKVPPCRLADDMYGLFDNKQFSDFTLVCKSDLGSPTQTFHIHKAILAARSRVFSAMFEHHMQESDTNMTTVDDIEPEVMRELLVYMYTGQTKYIEQMAQSLIAAADKYQLDRLKVMCEQALCYQLTTDNASLTLMLADMYSASQLRAHSINFINVNANEVMDTEGWEDLVRDHPKLLEEVFRALATQQTPPVVLVQPPKKRPKHNCPY.

Positions 51 to 75 (EVVSSGSGNSAHGRSISPSPSSASH) are disordered. Positions 60-75 (SAHGRSISPSPSSASH) are enriched in low complexity. An MATH domain is found at 95–225 (KFNYMWTINN…GDRLSIFCEV (131 aa)). Residues 265-338 (SDFTLVCKSD…MYTGQTKYIE (74 aa)) form the BTB domain.

It belongs to the Tdpoz family.

The protein localises to the nucleus. Its subcellular location is the nucleus speckle. It functions in the pathway protein modification; protein ubiquitination. Its function is as follows. Mediates ubiquitination and proteasomal degradation of target proteins, most likely in complex with cul-3. May promote the degradation of bromodomain-containing proteins such as bet-1. This is Speckle-type POZ protein homolog from Caenorhabditis elegans.